A 164-amino-acid chain; its full sequence is MLSKSKRSCRRRETLRIGEKMSAPITNLQAAQRDAIMNRPAVNGFPHLAETLRRAGVRTNTWWLPAMQSLYETDYGPVLDQGVPLIDGVAEVPAFDRTALVTALRADQAGQTSFREFAAAAWRAGVLRYVVDLENRTCTYFGLHDQTYMEHYAAVEPSGGAPTS.

This is an uncharacterized protein from Mycobacterium tuberculosis (strain CDC 1551 / Oshkosh).